The following is a 222-amino-acid chain: Thiopurine S-methyltransferase (222 aa).

Residues tryptophan 10, leucine 45, glutamate 66, and arginine 126 each coordinate S-adenosyl-L-methionine.

The protein belongs to the class I-like SAM-binding methyltransferase superfamily. TPMT family.

Its subcellular location is the cytoplasm. The catalysed reaction is S-adenosyl-L-methionine + a thiopurine = S-adenosyl-L-homocysteine + a thiopurine S-methylether.. The polypeptide is Thiopurine S-methyltransferase (Shewanella piezotolerans (strain WP3 / JCM 13877)).